The following is a 272-amino-acid chain: 2-succinyl-6-hydroxy-2,4-cyclohexadiene-1-carboxylate synthase (272 aa).

The protein belongs to the AB hydrolase superfamily. MenH family. Monomer.

The enzyme catalyses 5-enolpyruvoyl-6-hydroxy-2-succinyl-cyclohex-3-ene-1-carboxylate = (1R,6R)-6-hydroxy-2-succinyl-cyclohexa-2,4-diene-1-carboxylate + pyruvate. The protein operates within quinol/quinone metabolism; 1,4-dihydroxy-2-naphthoate biosynthesis; 1,4-dihydroxy-2-naphthoate from chorismate: step 3/7. It functions in the pathway quinol/quinone metabolism; menaquinone biosynthesis. Catalyzes a proton abstraction reaction that results in 2,5-elimination of pyruvate from 2-succinyl-5-enolpyruvyl-6-hydroxy-3-cyclohexene-1-carboxylate (SEPHCHC) and the formation of 2-succinyl-6-hydroxy-2,4-cyclohexadiene-1-carboxylate (SHCHC). In Yersinia pestis bv. Antiqua (strain Nepal516), this protein is 2-succinyl-6-hydroxy-2,4-cyclohexadiene-1-carboxylate synthase.